A 702-amino-acid chain; its full sequence is Phosphoglycerol transferase I (702 aa).

Helical transmembrane passes span 2–22 (HWIL…SPRL), 71–91 (FSGY…PLML), and 103–123 (GGAV…VSPV).

This sequence belongs to the OpgB family.

The protein resides in the cell inner membrane. The enzyme catalyses a phosphatidylglycerol + a membrane-derived-oligosaccharide D-glucose = a 1,2-diacyl-sn-glycerol + a membrane-derived-oligosaccharide 6-(glycerophospho)-D-glucose.. It participates in glycan metabolism; osmoregulated periplasmic glucan (OPG) biosynthesis. In terms of biological role, transfers a phosphoglycerol residue from phosphatidylglycerol to the membrane-bound nascent glucan backbones. This Xanthomonas campestris pv. campestris (strain B100) protein is Phosphoglycerol transferase I.